Reading from the N-terminus, the 453-residue chain is Acyl-coenzyme A thioesterase 2, mitochondrial (453 aa).

Residues Met1–Thr42 constitute a mitochondrion transit peptide. Lys83 bears the N6-acetyllysine mark. Catalysis depends on charge relay system residues Ser273, Asp365, and His399. At Lys447 the chain carries N6-succinyllysine.

The protein belongs to the C/M/P thioester hydrolase family. In terms of assembly, monomer. Post-translationally, the N-terminus is blocked. Constitutively expressed in heart and brown fat. Strongly induced in liver, and weakly in kidney, in peroxisome proliferator treated rat.

The protein resides in the mitochondrion matrix. It carries out the reaction hexadecanoyl-CoA + H2O = hexadecanoate + CoA + H(+). It catalyses the reaction tetradecanoyl-CoA + H2O = tetradecanoate + CoA + H(+). The catalysed reaction is octadecanoyl-CoA + H2O = octadecanoate + CoA + H(+). The enzyme catalyses eicosanoyl-CoA + H2O = eicosanoate + CoA + H(+). It carries out the reaction decanoyl-CoA + H2O = decanoate + CoA + H(+). It catalyses the reaction dodecanoyl-CoA + H2O = dodecanoate + CoA + H(+). The catalysed reaction is (9Z)-octadecenoyl-CoA + H2O = (9Z)-octadecenoate + CoA + H(+). The enzyme catalyses (9Z)-hexadecenoyl-CoA + H2O = (9Z)-hexadecenoate + CoA + H(+). It carries out the reaction (9E)-octadecenoyl-CoA + H2O = (9E)-octadecenoate + CoA + H(+). It catalyses the reaction (9Z,12Z)-octadecadienoyl-CoA + H2O = (9Z,12Z)-octadecadienoate + CoA + H(+). Its pathway is lipid metabolism; fatty acid metabolism. Catalyzes the hydrolysis of acyl-CoAs into free fatty acids and coenzyme A (CoASH), regulating their respective intracellular levels. Displays higher activity toward long chain acyl CoAs (C14-C20). The enzyme is involved in enhancing the hepatic fatty acid oxidation in mitochondria. The chain is Acyl-coenzyme A thioesterase 2, mitochondrial (Acot2) from Rattus norvegicus (Rat).